Here is a 234-residue protein sequence, read N- to C-terminus: 2-C-methyl-D-erythritol 4-phosphate cytidylyltransferase (234 aa).

The protein belongs to the IspD/TarI cytidylyltransferase family. IspD subfamily.

It catalyses the reaction 2-C-methyl-D-erythritol 4-phosphate + CTP + H(+) = 4-CDP-2-C-methyl-D-erythritol + diphosphate. It functions in the pathway isoprenoid biosynthesis; isopentenyl diphosphate biosynthesis via DXP pathway; isopentenyl diphosphate from 1-deoxy-D-xylulose 5-phosphate: step 2/6. In terms of biological role, catalyzes the formation of 4-diphosphocytidyl-2-C-methyl-D-erythritol from CTP and 2-C-methyl-D-erythritol 4-phosphate (MEP). The polypeptide is 2-C-methyl-D-erythritol 4-phosphate cytidylyltransferase (Pseudomonas paraeruginosa (strain DSM 24068 / PA7) (Pseudomonas aeruginosa (strain PA7))).